The chain runs to 216 residues: MTTPVSFHPQAFIELALSRGVLKFGEFTLKSGRVSPYFFNAGLLNDGEALSLLAQGYADKLTQCENVDVIFGPAYKGIPFVAATAVALSQVHNKSVPWGFNRKEAKDHGEGGVLVGAAVEGKKVWIIDDVITAGTAIREVVTILKNAGATIAGVLVALDRQERGQGELSAIQEVQKELEIPVHALITMKDLMDYLEAKGEKEALANMQAYREKYGI.

5-phospho-alpha-D-ribose 1-diphosphate is bound at residue Lys-30. Orotate is bound at residue 38-39 (FF). Residues 75 to 76 (YK), Arg-102, Lys-103, Lys-106, His-108, and 128 to 136 (DDVITAGTA) contribute to the 5-phospho-alpha-D-ribose 1-diphosphate site. Orotate is bound by residues Thr-132 and Arg-160.

It belongs to the purine/pyrimidine phosphoribosyltransferase family. PyrE subfamily. In terms of assembly, homodimer. Mg(2+) serves as cofactor.

It catalyses the reaction orotidine 5'-phosphate + diphosphate = orotate + 5-phospho-alpha-D-ribose 1-diphosphate. It participates in pyrimidine metabolism; UMP biosynthesis via de novo pathway; UMP from orotate: step 1/2. Functionally, catalyzes the transfer of a ribosyl phosphate group from 5-phosphoribose 1-diphosphate to orotate, leading to the formation of orotidine monophosphate (OMP). In Acinetobacter baumannii (strain ATCC 17978 / DSM 105126 / CIP 53.77 / LMG 1025 / NCDC KC755 / 5377), this protein is Orotate phosphoribosyltransferase.